We begin with the raw amino-acid sequence, 442 residues long: Trigger factor (442 aa).

The PPIase FKBP-type domain maps to 162–247 (GDRMTFDFEG…VKAIESRELP (86 aa)).

It belongs to the FKBP-type PPIase family. Tig subfamily.

It is found in the cytoplasm. The catalysed reaction is [protein]-peptidylproline (omega=180) = [protein]-peptidylproline (omega=0). In terms of biological role, involved in protein export. Acts as a chaperone by maintaining the newly synthesized protein in an open conformation. Functions as a peptidyl-prolyl cis-trans isomerase. The chain is Trigger factor from Magnetococcus marinus (strain ATCC BAA-1437 / JCM 17883 / MC-1).